A 1400-amino-acid polypeptide reads, in one-letter code: DNA-directed RNA polymerase subunit beta' (1400 aa).

Zn(2+) contacts are provided by C70, C72, C85, and C88. Residues D460, D462, and D464 each contribute to the Mg(2+) site. Zn(2+) contacts are provided by C814, C889, C896, and C899.

This sequence belongs to the RNA polymerase beta' chain family. The RNAP catalytic core consists of 2 alpha, 1 beta, 1 beta' and 1 omega subunit. When a sigma factor is associated with the core the holoenzyme is formed, which can initiate transcription. Requires Mg(2+) as cofactor. Zn(2+) serves as cofactor.

It catalyses the reaction RNA(n) + a ribonucleoside 5'-triphosphate = RNA(n+1) + diphosphate. DNA-dependent RNA polymerase catalyzes the transcription of DNA into RNA using the four ribonucleoside triphosphates as substrates. In Alcanivorax borkumensis (strain ATCC 700651 / DSM 11573 / NCIMB 13689 / SK2), this protein is DNA-directed RNA polymerase subunit beta'.